The sequence spans 341 residues: DNA-directed RNA polymerase subunit alpha (341 aa).

The segment at Met-1 to Lys-233 is alpha N-terminal domain (alpha-NTD). Residues Ser-262–Glu-341 are alpha C-terminal domain (alpha-CTD).

This sequence belongs to the RNA polymerase alpha chain family. As to quaternary structure, in plastids the minimal PEP RNA polymerase catalytic core is composed of four subunits: alpha, beta, beta', and beta''. When a (nuclear-encoded) sigma factor is associated with the core the holoenzyme is formed, which can initiate transcription.

The protein resides in the plastid. Its subcellular location is the chloroplast. The enzyme catalyses RNA(n) + a ribonucleoside 5'-triphosphate = RNA(n+1) + diphosphate. In terms of biological role, DNA-dependent RNA polymerase catalyzes the transcription of DNA into RNA using the four ribonucleoside triphosphates as substrates. The polypeptide is DNA-directed RNA polymerase subunit alpha (Marsilea quadrifolia (European water clover)).